The sequence spans 245 residues: 4-hydroxy-tetrahydrodipicolinate reductase (245 aa).

NAD(+)-binding positions include 7–12, 75–77, and 102–105; these read GAKGKV, GTT, and APNF. The active-site Proton donor/acceptor is His132. His133 lines the (S)-2,3,4,5-tetrahydrodipicolinate pocket. Lys136 functions as the Proton donor in the catalytic mechanism. 142–143 contributes to the (S)-2,3,4,5-tetrahydrodipicolinate binding site; sequence GT.

Belongs to the DapB family.

It is found in the cytoplasm. The enzyme catalyses (S)-2,3,4,5-tetrahydrodipicolinate + NAD(+) + H2O = (2S,4S)-4-hydroxy-2,3,4,5-tetrahydrodipicolinate + NADH + H(+). It catalyses the reaction (S)-2,3,4,5-tetrahydrodipicolinate + NADP(+) + H2O = (2S,4S)-4-hydroxy-2,3,4,5-tetrahydrodipicolinate + NADPH + H(+). It functions in the pathway amino-acid biosynthesis; L-lysine biosynthesis via DAP pathway; (S)-tetrahydrodipicolinate from L-aspartate: step 4/4. In terms of biological role, catalyzes the conversion of 4-hydroxy-tetrahydrodipicolinate (HTPA) to tetrahydrodipicolinate. This chain is 4-hydroxy-tetrahydrodipicolinate reductase, found in Mycolicibacterium gilvum (strain PYR-GCK) (Mycobacterium gilvum (strain PYR-GCK)).